Here is a 246-residue protein sequence, read N- to C-terminus: 1-(5-phosphoribosyl)-5-[(5-phosphoribosylamino)methylideneamino] imidazole-4-carboxamide isomerase (246 aa).

Catalysis depends on D8, which acts as the Proton acceptor. The Proton donor role is filled by D130.

The protein belongs to the HisA/HisF family.

The protein resides in the cytoplasm. It carries out the reaction 1-(5-phospho-beta-D-ribosyl)-5-[(5-phospho-beta-D-ribosylamino)methylideneamino]imidazole-4-carboxamide = 5-[(5-phospho-1-deoxy-D-ribulos-1-ylimino)methylamino]-1-(5-phospho-beta-D-ribosyl)imidazole-4-carboxamide. The protein operates within amino-acid biosynthesis; L-histidine biosynthesis; L-histidine from 5-phospho-alpha-D-ribose 1-diphosphate: step 4/9. The chain is 1-(5-phosphoribosyl)-5-[(5-phosphoribosylamino)methylideneamino] imidazole-4-carboxamide isomerase from Shigella sonnei (strain Ss046).